Reading from the N-terminus, the 209-residue chain is uncharacterized protein (209 aa).

3 helical membrane passes run 10 to 32 (AVVIILTRFMEAIAIIISIYLAF), 37 to 59 (LRYVLATAGVFLLSVLINLTGLI), and 64 to 86 (FIYFSLASIFLSALILTALILYV).

It localises to the cell membrane. This is an uncharacterized protein from Aquifex aeolicus (strain VF5).